The chain runs to 429 residues: Glutamate-1-semialdehyde 2,1-aminomutase (429 aa).

At K267 the chain carries N6-(pyridoxal phosphate)lysine.

It belongs to the class-III pyridoxal-phosphate-dependent aminotransferase family. HemL subfamily. Homodimer. It depends on pyridoxal 5'-phosphate as a cofactor.

The protein localises to the cytoplasm. It catalyses the reaction (S)-4-amino-5-oxopentanoate = 5-aminolevulinate. The protein operates within porphyrin-containing compound metabolism; protoporphyrin-IX biosynthesis; 5-aminolevulinate from L-glutamyl-tRNA(Glu): step 2/2. This is Glutamate-1-semialdehyde 2,1-aminomutase from Xanthomonas oryzae pv. oryzae (strain PXO99A).